Reading from the N-terminus, the 321-residue chain is uncharacterized protein (321 aa).

The protein belongs to the NAD(P)-dependent epimerase/dehydratase family.

This is an uncharacterized protein from Staphylococcus aureus (strain bovine RF122 / ET3-1).